The primary structure comprises 57 residues: UPF0434 protein swp_2279 (57 aa).

This sequence belongs to the UPF0434 family.

The polypeptide is UPF0434 protein swp_2279 (Shewanella piezotolerans (strain WP3 / JCM 13877)).